We begin with the raw amino-acid sequence, 287 residues long: Phosphatidylserine decarboxylase proenzyme (287 aa).

Catalysis depends on charge relay system; for autoendoproteolytic cleavage activity residues D90, H147, and S252. Catalysis depends on S252, which acts as the Schiff-base intermediate with substrate; via pyruvic acid; for decarboxylase activity. S252 carries the pyruvic acid (Ser); by autocatalysis modification.

This sequence belongs to the phosphatidylserine decarboxylase family. PSD-B subfamily. Prokaryotic type I sub-subfamily. In terms of assembly, heterodimer of a large membrane-associated beta subunit and a small pyruvoyl-containing alpha subunit. Pyruvate is required as a cofactor. Post-translationally, is synthesized initially as an inactive proenzyme. Formation of the active enzyme involves a self-maturation process in which the active site pyruvoyl group is generated from an internal serine residue via an autocatalytic post-translational modification. Two non-identical subunits are generated from the proenzyme in this reaction, and the pyruvate is formed at the N-terminus of the alpha chain, which is derived from the carboxyl end of the proenzyme. The autoendoproteolytic cleavage occurs by a canonical serine protease mechanism, in which the side chain hydroxyl group of the serine supplies its oxygen atom to form the C-terminus of the beta chain, while the remainder of the serine residue undergoes an oxidative deamination to produce ammonia and the pyruvoyl prosthetic group on the alpha chain. During this reaction, the Ser that is part of the protease active site of the proenzyme becomes the pyruvoyl prosthetic group, which constitutes an essential element of the active site of the mature decarboxylase.

It is found in the cell membrane. It catalyses the reaction a 1,2-diacyl-sn-glycero-3-phospho-L-serine + H(+) = a 1,2-diacyl-sn-glycero-3-phosphoethanolamine + CO2. It participates in phospholipid metabolism; phosphatidylethanolamine biosynthesis; phosphatidylethanolamine from CDP-diacylglycerol: step 2/2. Functionally, catalyzes the formation of phosphatidylethanolamine (PtdEtn) from phosphatidylserine (PtdSer). The sequence is that of Phosphatidylserine decarboxylase proenzyme from Pseudomonas putida (strain GB-1).